A 192-amino-acid chain; its full sequence is Xanthine phosphoribosyltransferase (192 aa).

Leucine 20 and asparagine 27 together coordinate xanthine. Residue 128 to 132 participates in 5-phospho-alpha-D-ribose 1-diphosphate binding; sequence ANGDA. Residue lysine 156 coordinates xanthine.

The protein belongs to the purine/pyrimidine phosphoribosyltransferase family. Xpt subfamily. Homodimer.

It is found in the cytoplasm. It carries out the reaction XMP + diphosphate = xanthine + 5-phospho-alpha-D-ribose 1-diphosphate. The protein operates within purine metabolism; XMP biosynthesis via salvage pathway; XMP from xanthine: step 1/1. Its function is as follows. Converts the preformed base xanthine, a product of nucleic acid breakdown, to xanthosine 5'-monophosphate (XMP), so it can be reused for RNA or DNA synthesis. The protein is Xanthine phosphoribosyltransferase of Staphylococcus aureus (strain MRSA252).